A 103-amino-acid chain; its full sequence is Large ribosomal subunit protein uL23 (103 aa).

This sequence belongs to the universal ribosomal protein uL23 family. In terms of assembly, part of the 50S ribosomal subunit. Contacts protein L29, and trigger factor when it is bound to the ribosome.

Functionally, one of the early assembly proteins it binds 23S rRNA. One of the proteins that surrounds the polypeptide exit tunnel on the outside of the ribosome. Forms the main docking site for trigger factor binding to the ribosome. The sequence is that of Large ribosomal subunit protein uL23 from Chlorobium chlorochromatii (strain CaD3).